Consider the following 199-residue polypeptide: Large ribosomal subunit protein bL25 (199 aa).

The protein belongs to the bacterial ribosomal protein bL25 family. CTC subfamily. As to quaternary structure, part of the 50S ribosomal subunit; part of the 5S rRNA/L5/L18/L25 subcomplex. Contacts the 5S rRNA. Binds to the 5S rRNA independently of L5 and L18.

Its function is as follows. This is one of the proteins that binds to the 5S RNA in the ribosome where it forms part of the central protuberance. The sequence is that of Large ribosomal subunit protein bL25 from Pelodictyon phaeoclathratiforme (strain DSM 5477 / BU-1).